A 156-amino-acid chain; its full sequence is 17 kDa lipoprotein (156 aa).

An N-terminal signal peptide occupies residues 1-21 (MKGSVRALCAFLGVGALGSAL). Cysteine 22 is lipidated: N-palmitoyl cysteine. Cysteine 22 carries the S-diacylglycerol cysteine lipid modification.

It is found in the cell membrane. In Treponema pallidum (strain Nichols), this protein is 17 kDa lipoprotein (tpp17).